Consider the following 274-residue polypeptide: Bis(5'-nucleosyl)-tetraphosphatase, symmetrical (274 aa).

Belongs to the Ap4A hydrolase family.

It carries out the reaction P(1),P(4)-bis(5'-adenosyl) tetraphosphate + H2O = 2 ADP + 2 H(+). Hydrolyzes diadenosine 5',5'''-P1,P4-tetraphosphate to yield ADP. The protein is Bis(5'-nucleosyl)-tetraphosphatase, symmetrical of Erwinia tasmaniensis (strain DSM 17950 / CFBP 7177 / CIP 109463 / NCPPB 4357 / Et1/99).